A 637-amino-acid chain; its full sequence is Nuclear receptor subfamily 2 group C member 1-A (637 aa).

Positions 149-224 (VELCVVCGDK…LGMKQDSVQC (76 aa)) form a DNA-binding region, nuclear receptor. 2 NR C4-type zinc fingers span residues 152-172 (CVVCGDKASGRHYGAVTCEGC) and 188-207 (CRGSKDCVINKHYRNRCQYC). Residues 383 to 624 (CLGSNANLLH…SIIPYILRME (242 aa)) enclose the NR LBD domain.

The protein belongs to the nuclear hormone receptor family. NR2 subfamily.

Its subcellular location is the nucleus. Functionally, orphan nuclear receptor. Binds the IR7 element in the promoter of its own gene in an autoregulatory negative feedback mechanism. Primarily repressor of a broad range of genes. Binds to hormone response elements (HREs) consisting of two 5'-AGGTCA-3' half site direct repeat consensus sequences. The chain is Nuclear receptor subfamily 2 group C member 1-A (nr2c1-a) from Xenopus laevis (African clawed frog).